A 161-amino-acid polypeptide reads, in one-letter code: Regulator of ribonuclease activity A (161 aa).

This sequence belongs to the RraA family. Homotrimer. Binds to both RNA-binding sites in the C-terminal region of Rne and to RhlB.

The protein localises to the cytoplasm. Globally modulates RNA abundance by binding to RNase E (Rne) and regulating its endonucleolytic activity. Can modulate Rne action in a substrate-dependent manner by altering the composition of the degradosome. Modulates RNA-binding and helicase activities of the degradosome. The polypeptide is Regulator of ribonuclease activity A (Cronobacter sakazakii (strain ATCC BAA-894) (Enterobacter sakazakii)).